The following is a 388-amino-acid chain: Methylthioribose-1-phosphate isomerase (388 aa).

Asp-258 acts as the Proton donor in catalysis.

It belongs to the eIF-2B alpha/beta/delta subunits family. MtnA subfamily.

The protein resides in the cytoplasm. It is found in the nucleus. The catalysed reaction is 5-(methylsulfanyl)-alpha-D-ribose 1-phosphate = 5-(methylsulfanyl)-D-ribulose 1-phosphate. It functions in the pathway amino-acid biosynthesis; L-methionine biosynthesis via salvage pathway; L-methionine from S-methyl-5-thio-alpha-D-ribose 1-phosphate: step 1/6. Functionally, catalyzes the interconversion of methylthioribose-1-phosphate (MTR-1-P) into methylthioribulose-1-phosphate (MTRu-1-P). The chain is Methylthioribose-1-phosphate isomerase from Sordaria macrospora (strain ATCC MYA-333 / DSM 997 / K(L3346) / K-hell).